Here is a 319-residue protein sequence, read N- to C-terminus: NADH-ubiquinone oxidoreductase chain 1 (319 aa).

The next 8 membrane-spanning stretches (helical) occupy residues 5–25, 72–92, 102–122, 146–166, 173–193, 225–245, 254–274, and 295–315; these read TINSLMYIIPILIAVAFLTLM, LLISSPILALTTAMLIWTPIP, LGLLSILAISSMAVNSILWAG, VTLGIILLSILILTGGFTMQL, FTWLLTTSWPLAMMWFISTLA, FFLTEYANIIVMNLLTCILFI, ELFLINLITKTMILSLSFLWI, and LPLTMSLCLLHTSLPISTSGI.

The protein belongs to the complex I subunit 1 family.

The protein localises to the mitochondrion inner membrane. It catalyses the reaction a ubiquinone + NADH + 5 H(+)(in) = a ubiquinol + NAD(+) + 4 H(+)(out). Core subunit of the mitochondrial membrane respiratory chain NADH dehydrogenase (Complex I) that is believed to belong to the minimal assembly required for catalysis. Complex I functions in the transfer of electrons from NADH to the respiratory chain. The immediate electron acceptor for the enzyme is believed to be ubiquinone. The chain is NADH-ubiquinone oxidoreductase chain 1 (MT-ND1) from Varanus flavescens (Yellow monitor).